The primary structure comprises 341 residues: Probable alcohol acetyltransferase (341 aa).

The N-terminal 40 residues, 1–40, are a transit peptide targeting the mitochondrion; the sequence is MFASRILRNSAQTLKTELPHKETIKMAYDLHKPRSTAIRH. In terms of domain architecture, AB hydrolase-1 spans 48–301; it reads PILFLHGIFG…NSNHDILDQR (254 aa). Catalysis depends on charge relay system residues Ser-121, Asp-145, and His-295.

Belongs to the AB hydrolase superfamily.

The protein localises to the mitochondrion. In terms of biological role, probable alcohol acetyltransferase that uses acetyl-CoA to synthesize acetate esters from various alcohols. Not involved in the synthesis of ethyl acetate. This chain is Probable alcohol acetyltransferase (EAT2), found in Wickerhamomyces anomalus (strain ATCC 58044 / CBS 1984 / NCYC 433 / NRRL Y-366-8) (Yeast).